The primary structure comprises 211 residues: Glycerol-3-phosphate acyltransferase (211 aa).

Helical transmembrane passes span 10–30 (FYTWSIFLMSYLIGSIPFGLL), 63–83 (TLTLLCDILKGTVVVLVIKFL), 90–110 (SIIISLVGFFAFLGHLFPIWL), 126–146 (LGYYWPAAIVFIIVWIMFFIL), 152–172 (LSALIAVIITPIFVYFSYPHL), and 174–194 (AHCILVMMSIFVIIKHHANIA).

This sequence belongs to the PlsY family. In terms of assembly, probably interacts with PlsX.

It localises to the cell inner membrane. The catalysed reaction is an acyl phosphate + sn-glycerol 3-phosphate = a 1-acyl-sn-glycero-3-phosphate + phosphate. The protein operates within lipid metabolism; phospholipid metabolism. Functionally, catalyzes the transfer of an acyl group from acyl-phosphate (acyl-PO(4)) to glycerol-3-phosphate (G3P) to form lysophosphatidic acid (LPA). This enzyme utilizes acyl-phosphate as fatty acyl donor, but not acyl-CoA or acyl-ACP. The chain is Glycerol-3-phosphate acyltransferase from Bartonella quintana (strain Toulouse) (Rochalimaea quintana).